Here is a 291-residue protein sequence, read N- to C-terminus: F-box/kelch-repeat protein At5g38670 (291 aa).

Positions 5–51 (TNPNPSLPDDLILSCVARVSRLYYPALSLVSKSFRSLIASPELYKTR) constitute an F-box domain. Kelch repeat units follow at residues 46-91 (ELYK…VLDE), 92-140 (KIYV…RFDG), 142-187 (LHLV…WYTI), and 189-232 (KGDI…YGGK).

This chain is F-box/kelch-repeat protein At5g38670, found in Arabidopsis thaliana (Mouse-ear cress).